The primary structure comprises 123 residues: Galectin-2 (123 aa).

The Galectin domain occupies 4–123 (KVEIMNMDMK…LRYLSVQGGF (120 aa)). Position 65-71 (65-71 (WGKEQRD)) interacts with a beta-D-galactoside.

Homodimer.

This protein binds beta-galactoside. Its physiological function is not yet known. This chain is Galectin-2 (LGALS2), found in Sus scrofa (Pig).